The following is a 394-amino-acid chain: Elongation factor Tu 1 (394 aa).

One can recognise a tr-type G domain in the interval 10 to 204; it reads KPHVNVGTIG…ALDSYIPEPQ (195 aa). Positions 19-26 are G1; sequence GHVDHGKT. Position 19–26 (19–26) interacts with GTP; sequence GHVDHGKT. Thr26 contacts Mg(2+). Residues 60-64 form a G2 region; that stretch reads GITIS. A G3 region spans residues 81-84; the sequence is DCPG. GTP is bound by residues 81–85 and 136–139; these read DCPGH and NKCD. Residues 136-139 form a G4 region; the sequence is NKCD. The interval 174–176 is G5; it reads SAL.

This sequence belongs to the TRAFAC class translation factor GTPase superfamily. Classic translation factor GTPase family. EF-Tu/EF-1A subfamily. In terms of assembly, monomer.

Its subcellular location is the cytoplasm. The enzyme catalyses GTP + H2O = GDP + phosphate + H(+). Functionally, GTP hydrolase that promotes the GTP-dependent binding of aminoacyl-tRNA to the A-site of ribosomes during protein biosynthesis. In Pseudoalteromonas translucida (strain TAC 125), this protein is Elongation factor Tu 1.